A 473-amino-acid chain; its full sequence is Photosystem II CP43 reaction center protein (473 aa).

Residues 1–14 (MKTLYSLRRFYPVE) constitute a propeptide that is removed on maturation. Thr-15 is modified (N-acetylthreonine). The residue at position 15 (Thr-15) is a Phosphothreonine. Helical transmembrane passes span 69–93 (LFEV…PHLA), 134–155 (LLGP…KDRN), 178–200 (KALY…RKIT), 255–275 (KPFA…LSYS), and 291–312 (WFNN…ASQA). Glu-367 is a binding site for [CaMn4O5] cluster. Residues 447 to 471 (RARAAAAGFEKGIDRDLEPVLSMTP) form a helical membrane-spanning segment.

The protein belongs to the PsbB/PsbC family. PsbC subfamily. As to quaternary structure, PSII is composed of 1 copy each of membrane proteins PsbA, PsbB, PsbC, PsbD, PsbE, PsbF, PsbH, PsbI, PsbJ, PsbK, PsbL, PsbM, PsbT, PsbX, PsbY, PsbZ, Psb30/Ycf12, at least 3 peripheral proteins of the oxygen-evolving complex and a large number of cofactors. It forms dimeric complexes. The cofactor is Binds multiple chlorophylls and provides some of the ligands for the Ca-4Mn-5O cluster of the oxygen-evolving complex. It may also provide a ligand for a Cl- that is required for oxygen evolution. PSII binds additional chlorophylls, carotenoids and specific lipids..

The protein resides in the plastid. Its subcellular location is the chloroplast thylakoid membrane. One of the components of the core complex of photosystem II (PSII). It binds chlorophyll and helps catalyze the primary light-induced photochemical processes of PSII. PSII is a light-driven water:plastoquinone oxidoreductase, using light energy to abstract electrons from H(2)O, generating O(2) and a proton gradient subsequently used for ATP formation. This chain is Photosystem II CP43 reaction center protein, found in Dioscorea elephantipes (Elephant's foot yam).